Reading from the N-terminus, the 22-residue chain is uncharacterized protein (22 aa).

A helical transmembrane segment spans residues 3 to 22 (MFITGYDINQKQKKRYGLRG).

Belongs to the asfivirus C84L family.

It is found in the host membrane. This is an uncharacterized protein from Ornithodoros (relapsing fever ticks).